Reading from the N-terminus, the 269-residue chain is 4-hydroxy-tetrahydrodipicolinate reductase (269 aa).

NAD(+) contacts are provided by residues 10–15 (GANGRM), Glu36, 99–101 (GTT), and 123–126 (AANF). The active-site Proton donor/acceptor is the His156. (S)-2,3,4,5-tetrahydrodipicolinate is bound at residue His157. Lys160 serves as the catalytic Proton donor. 166–167 (GT) is a binding site for (S)-2,3,4,5-tetrahydrodipicolinate.

The protein belongs to the DapB family.

It is found in the cytoplasm. The catalysed reaction is (S)-2,3,4,5-tetrahydrodipicolinate + NAD(+) + H2O = (2S,4S)-4-hydroxy-2,3,4,5-tetrahydrodipicolinate + NADH + H(+). It catalyses the reaction (S)-2,3,4,5-tetrahydrodipicolinate + NADP(+) + H2O = (2S,4S)-4-hydroxy-2,3,4,5-tetrahydrodipicolinate + NADPH + H(+). It functions in the pathway amino-acid biosynthesis; L-lysine biosynthesis via DAP pathway; (S)-tetrahydrodipicolinate from L-aspartate: step 4/4. In terms of biological role, catalyzes the conversion of 4-hydroxy-tetrahydrodipicolinate (HTPA) to tetrahydrodipicolinate. The protein is 4-hydroxy-tetrahydrodipicolinate reductase of Neisseria meningitidis serogroup B (strain ATCC BAA-335 / MC58).